Consider the following 258-residue polypeptide: UPF0246 protein YaaA (258 aa).

This sequence belongs to the UPF0246 family.

This Escherichia coli (strain UTI89 / UPEC) protein is UPF0246 protein YaaA.